Consider the following 138-residue polypeptide: Thyrotropin subunit beta (138 aa).

Positions 1 to 20 are cleaved as a signal peptide; it reads MTATFLMSMIFGLACGQAMS. Cystine bridges form between C22-C72, C36-C87, C39-C125, C47-C103, C51-C105, and C108-C115. N-linked (GlcNAc...) asparagine glycosylation occurs at N43. Residues 133–138 constitute a propeptide that is removed on maturation; that stretch reads MVGFSI.

Belongs to the glycoprotein hormones subunit beta family. As to quaternary structure, heterodimer of a common alpha chain and a unique beta chain which confers biological specificity to thyrotropin, lutropin, follitropin and gonadotropin.

Its subcellular location is the secreted. Indispensable for the control of thyroid structure and metabolism. This Bos taurus (Bovine) protein is Thyrotropin subunit beta (TSHB).